The chain runs to 161 residues: Nucleotide-binding protein BTH_I0730 (161 aa).

The protein belongs to the YajQ family.

Functionally, nucleotide-binding protein. This Burkholderia thailandensis (strain ATCC 700388 / DSM 13276 / CCUG 48851 / CIP 106301 / E264) protein is Nucleotide-binding protein BTH_I0730.